The chain runs to 429 residues: ETS domain-containing protein Elk-1 (429 aa).

Positions 5-86 (VTLWQFLLQL…SGQKFVYKFV (82 aa)) form a DNA-binding region, ETS. 3 disordered regions span residues 119-146 (HAGP…GLAR), 165-204 (SLQP…SPNP), and 227-253 (APNQ…KVEG). Positions 169–178 (QPQPPIPPRP) are enriched in pro residues. Residues K231, K250, and K255 each participate in a glycyl lysine isopeptide (Lys-Gly) (interchain with G-Cter in SUMO) cross-link. A compositionally biased stretch (polar residues) spans 302-312 (STSTTEITQPQ). Residues 302–354 (STSTTEITQPQKGRKPRDLELPLSPSLLGGQGPERTPGSGTSSGLQAPGPALT) are disordered. S325 is modified (phosphoserine; by MAPK1). T337, T354, T364, and T369 each carry phosphothreonine; by MAPK1. Residues 350-400 (GPALTPSLLPTHTLTPVLLTPSSLPPSIHFWSTLSPIAPRSPAKLSFQFPS) form a sufficient for interaction with MAD2L2 region. O-linked (GlcNAc) threonine glycosylation is present at T382. The residue at position 384 (S384) is a Phosphoserine; by MAPK1 and MAPK8. S390 bears the Phosphoserine; by MAPK1 mark. T418 is subject to Phosphothreonine; by MAPK1. A Phosphoserine; by MAPK1 modification is found at S423.

Belongs to the ETS family. Interacts in its sumoylated form with PIAS2/PIASX which enhances its transcriptional activator activity. Interacts with MAD2L2; the interaction is direct and promotes phosphorylation by the kinases MAPK8 and/or MAPK9. Interacts with POU1F1. In terms of processing, sumoylation represses transcriptional activator activity as it results in recruitment of HDAC2 to target gene promoters which leads to decreased histone acetylation and reduced transactivator activity. It also regulates nuclear retention. On mitogenic stimulation, phosphorylated on C-terminal serine and threonine residues by MAPK1 but also MAPK8 and/or MAPK9. Phosphorylation leads to loss of sumoylation and restores transcriptional activator activity. Phosphorylated and activated by CaMK4, MAPK11, MAPK12 and MAPK14. Upon bFGF stimulus, phosphorylated by PAK1. Phosphorylated by PRP4K at Thr-418; phosphorylation activation ELK1 transcriptional activity. Predominantly expressed in the brain, and to a lesser extent in the heart, liver and muscle.

The protein localises to the nucleus. Functionally, transcription factor that binds to purine-rich DNA sequences. Forms a ternary complex with SRF and the ETS and SRF motifs of the serum response element (SRE) on the promoter region of immediate early genes such as FOS and IER2. Induces target gene transcription upon JNK and MAPK-signaling pathways stimulation. This chain is ETS domain-containing protein Elk-1, found in Mus musculus (Mouse).